The following is a 256-amino-acid chain: UPF0246 protein HRM2_41860 (256 aa).

This sequence belongs to the UPF0246 family.

This chain is UPF0246 protein HRM2_41860, found in Desulforapulum autotrophicum (strain ATCC 43914 / DSM 3382 / VKM B-1955 / HRM2) (Desulfobacterium autotrophicum).